We begin with the raw amino-acid sequence, 268 residues long: uncharacterized protein (268 aa).

This sequence to M.tuberculosis Rv0025 and Rv0026.

This is an uncharacterized protein from Mycobacterium tuberculosis (strain CDC 1551 / Oshkosh).